The sequence spans 278 residues: HTH-type transcriptional activator RhaS (278 aa).

Positions N174–G272 constitute an HTH araC/xylS-type domain. 2 DNA-binding regions (H-T-H motif) span residues E191–T212 and V239–F262.

In terms of assembly, binds DNA as a dimer.

The protein localises to the cytoplasm. Functionally, activates expression of the rhaBAD and rhaT operons. This chain is HTH-type transcriptional activator RhaS, found in Enterobacter sp. (strain 638).